The primary structure comprises 292 residues: 2-methylisocitrate lyase (292 aa).

Residue serine 44 to alanine 46 coordinates substrate. Residues aspartate 84 and aspartate 86 each contribute to the Mg(2+) site. Substrate is bound by residues cysteine 121–glycine 122, arginine 156, glutamate 186, asparagine 208–threonine 210, arginine 239, and arginine 268.

It belongs to the isocitrate lyase/PEP mutase superfamily. Methylisocitrate lyase family. Homotetramer; dimer of dimers. The cofactor is Mg(2+).

It catalyses the reaction (2S,3R)-3-hydroxybutane-1,2,3-tricarboxylate = pyruvate + succinate. It functions in the pathway organic acid metabolism; propanoate degradation. Involved in the catabolism of short chain fatty acids (SCFA) via the 2-methylcitrate cycle I (propionate degradation route). Catalyzes the thermodynamically favored C-C bond cleavage of (2R,3S)-2-methylisocitrate to yield pyruvate and succinate via an alpha-carboxy-carbanion intermediate. The protein is 2-methylisocitrate lyase of Shewanella oneidensis (strain ATCC 700550 / JCM 31522 / CIP 106686 / LMG 19005 / NCIMB 14063 / MR-1).